The chain runs to 223 residues: 2-phospho-L-lactate guanylyltransferase (223 aa).

It belongs to the CofC family. As to quaternary structure, homodimer.

The catalysed reaction is (2S)-2-phospholactate + GTP + H(+) = (2S)-lactyl-2-diphospho-5'-guanosine + diphosphate. The protein operates within cofactor biosynthesis; coenzyme F420 biosynthesis. Its function is as follows. Guanylyltransferase that catalyzes the activation of (2S)-2-phospholactate (2-PL) as (2S)-lactyl-2-diphospho-5'-guanosine, via the condensation of 2-PL with GTP. It is involved in the biosynthesis of coenzyme F420, a hydride carrier cofactor. The sequence is that of 2-phospho-L-lactate guanylyltransferase from Methanothermobacter thermautotrophicus (strain ATCC 29096 / DSM 1053 / JCM 10044 / NBRC 100330 / Delta H) (Methanobacterium thermoautotrophicum).